A 247-amino-acid chain; its full sequence is MMSNENFDNDYNLPPPNDSAEDLKIFIKRYERSVDSTLLEIDENKREALEKYIEERDRKMKYEIECNERLQGWKKLAIEREISEEQSGEVQFPRWIDEWANTKLGGIFERIFSKMDSMQNDMNSRFDAMQNEMNSRFDTVQNEMTSMKGEMAEMKVEMVEMKRETIRLNTRIDLLEQKTEARFQSIEQRFNSIDQRFNSIDRRFDSMEQRLDSMDQKMETIDARSCRSIMLTRKLENTTRSDQGYLA.

2 coiled-coil regions span residues Ile27 to Glu63 and Asp138 to Ser225.

Belongs to the UPF0612 family.

The protein resides in the cytoplasm. The sequence is that of UPF0612 protein P20C8.01c from Schizosaccharomyces pombe (strain 972 / ATCC 24843) (Fission yeast).